The sequence spans 1294 residues: CLIP-associating protein 2 (1294 aa).

Residues 1–61 (MAMGDDKSFD…KVGGASKEGG (61 aa)) are disordered. Phosphoserine occurs at positions 8 and 14. Positions 47 to 61 (SAGGPKVGGASKEGG) are enriched in gly residues. A TOG 1 region spans residues 60 to 311 (GGAGAVDEDD…KSLQTYLKSS (252 aa)). HEAT repeat units follow at residues 173 to 208 (HGAE…IRHT), 209 to 245 (HVPR…EWQT), and 250 to 287 (RHAA…HFPG). Residues 314–368 (VASLPQSDRSSSSSQESLNRPFSSKWSTANPSTVAGRVSAGSSKASSLPGSLQRS) form a disordered region. A phosphoserine mark is found at Ser-316, Ser-327, and Ser-330. Residues 316–334 (SLPQSDRSSSSSQESLNRP) show a composition bias toward low complexity. Composition is skewed to polar residues over residues 335-346 (FSSKWSTANPST) and 353-367 (AGSS…SLQR). A phosphoserine mark is found at Ser-360, Ser-368, Ser-370, and Ser-407. The interval 409–467 (EDTSDKLDGTASEDGRVRAKLSAPLAGMGNAKADSRGRSRTKMVSQSQPGSRSGSPGRV) is disordered. The segment covering 411–425 (TSDKLDGTASEDGRV) has biased composition (basic and acidic residues). Residues 444 to 580 (RGRSRTKMVS…GPGYGISQSS (137 aa)) are interaction with microtubules, MAPRE1 and MAPRE3. Over residues 453–467 (SQSQPGSRSGSPGRV) the composition is skewed to low complexity. A phosphoserine mark is found at Ser-455, Ser-459, Ser-463, Ser-478, and Ser-489. The disordered stretch occupies residues 488-557 (ASAQKRSKIP…PLASRHHSRS (70 aa)). Residues 494–497 (SKIP) carry the SXIP motif 1; mediates interaction with MAPRE1 and targeting to microtubule plus ends motif. Residue Ser-507 is modified to Phosphoserine. Positions 517-520 (SRIP) match the SXIP motif 2; mediates interaction with MAPRE1 and targeting to microtubule plus ends motif. Ser-525, Ser-529, Ser-585, Ser-587, Ser-596, Ser-621, and Ser-627 each carry phosphoserine. Residues 617 to 645 (YGMHSDDDANSDASSACSERSYSSRNGSI) form a disordered region. Positions 627–641 (SDASSACSERSYSSR) are enriched in low complexity. The segment at 649-881 (MRQTEDVAEV…TKLLHNHLRN (233 aa)) is TOG 2. HEAT repeat units follow at residues 710-747 (RVFS…KMGA) and 772-809 (LQFN…QMDP). Phosphothreonine is present on Thr-787. Positions 872–1294 (TKLLHNHLRN…DPTTDVSGQS (423 aa)) are interaction with RSN and localization to the Golgi and kinetochores. Disordered stretches follow at residues 878–928 (HLRN…FDYD) and 952–995 (SFRS…DSSQ). Composition is skewed to polar residues over residues 880 to 892 (RNTG…SMGS) and 901 to 922 (SPAN…TLSP). At Ser-892 the chain carries Phosphoserine. 4 positions are modified to phosphoserine: Ser-952, Ser-955, Ser-1013, and Ser-1029. The segment covering 955–972 (SQEDMNEPLKRDSKKDDG) has biased composition (basic and acidic residues). The segment at 1017–1294 (RDYNPYNYSD…DPTTDVSGQS (278 aa)) is required for cortical localization. 3 HEAT repeats span residues 1054-1091 (LDHS…TQEE), 1098-1135 (EHFK…HQPA), and 1216-1253 (LLLP…VIGD).

Belongs to the CLASP family. As to quaternary structure, interacts with microtubules. Interacts with MAPRE1; probably required for targeting to the growing microtubule plus ends. Interacts with CLIP2, ERC1, MAPRE3, PHLDB2 and RSN. The interaction with ERC1 may be mediated by PHLDB2. Interacts with GCC2; recruits CLASP2 to Golgi membranes. Interacts with MACF1. Interacts with mtcl2 and MTCL1. Phosphorylated by GSK3B. Phosphorylation reduces MAPRE1 binding. Phosphorylation by GSK3B may negatively regulate binding to microtubule lattices in lamella. In terms of tissue distribution, brain-specific.

The protein localises to the cytoplasm. It localises to the cytoskeleton. It is found in the microtubule organizing center. Its subcellular location is the centrosome. The protein resides in the chromosome. The protein localises to the centromere. It localises to the kinetochore. It is found in the spindle. Its subcellular location is the golgi apparatus. The protein resides in the trans-Golgi network. The protein localises to the cell membrane. It localises to the cell projection. It is found in the ruffle membrane. Its subcellular location is the cell cortex. In terms of biological role, microtubule plus-end tracking protein that promotes the stabilization of dynamic microtubules. Involved in the nucleation of noncentrosomal microtubules originating from the trans-Golgi network (TGN). Required for the polarization of the cytoplasmic microtubule arrays in migrating cells towards the leading edge of the cell. May act at the cell cortex to enhance the frequency of rescue of depolymerizing microtubules by attaching their plus-ends to cortical platforms composed of ERC1 and PHLDB2. This cortical microtubule stabilizing activity is regulated at least in part by phosphatidylinositol 3-kinase signaling. Also performs a similar stabilizing function at the kinetochore which is essential for the bipolar alignment of chromosomes on the mitotic spindle. Acts as a mediator of ERBB2-dependent stabilization of microtubules at the cell cortex. This is CLIP-associating protein 2 (CLASP2) from Homo sapiens (Human).